A 526-amino-acid polypeptide reads, in one-letter code: Delayed-rectifier potassium channel regulatory subunit KCNS1 (526 aa).

Residues 1-217 (MLMLLVRGTH…LTMENPGYSL (217 aa)) are Cytoplasmic-facing. Residues 218–239 (PSKLFSCVSISVVLASIAAMCI) form a helical membrane-spanning segment. The Extracellular portion of the chain corresponds to 240–270 (HSLPEYQAREAAAAVAAVAAGRSPEGVRDDP). A helical membrane pass occupies residues 271 to 293 (VLRRLEYFCIAWFSFEVSSRLLL). Residues 294–304 (APSTRNFFCHP) are Cytoplasmic-facing. A helical membrane pass occupies residues 305 to 322 (LNLIDIVSVLPFYLTLLA). Topologically, residues 323 to 337 (GVALGDQGGKEFGHL) are extracellular. The chain crosses the membrane as a helical; Voltage-sensor span at residues 338–358 (GKVVQVFRLMRIFRVLKLARH). Topologically, residues 359 to 373 (STGLRSLGATLKHSY) are cytoplasmic. A helical membrane pass occupies residues 374–395 (REVGILLLYLAVGVSVFSGVAY). The Extracellular portion of the chain corresponds to 396–408 (TAEKEEDVGFNTI). The segment at residues 409–420 (PACWWWGTVSMT) is an intramembrane region (helical). Residues 421–426 (TVGYGD) carry the Selectivity filter motif. Residues 421–428 (TVGYGDVV) lie within the membrane without spanning it. Topologically, residues 429–435 (PVTVAGK) are extracellular. Residues 436–464 (LAASGCILGGILVVALPITIIFNKFSHFY) traverse the membrane as a helical segment. Residues 465–526 (RRQKALEAAV…PSEPPHPQRY (62 aa)) are Cytoplasmic-facing. A disordered region spans residues 492-526 (VSEASLETSGETSQEGRSADLESQAPSEPPHPQRY). Over residues 496–507 (SLETSGETSQEG) the composition is skewed to polar residues.

This sequence belongs to the potassium channel family. S (TC 1.A.1.2) subfamily. Kv9.1/KCNS1 sub-subfamily. As to quaternary structure, heterotetramer with KCNB1. Heterotetramer with KCNB2. Does not form homomultimers.

Its subcellular location is the cell membrane. In terms of biological role, potassium channel regulatory subunit that modulate the delayed rectifier voltage-gated potassium channel activity of KCNB1 and KCNB2 by altering their kinetics, expression levels, and shifting the half-inactivation potential to more polarized values. While it does not form functional channels on its own, it can form functional heterotetrameric channels with KCNB1 and KCNB2. Each regulatory subunit has unique regulatory properties that can lead to extensive inhibition, significant changes in kinetics, and/or substantial shifts in the voltage dependencies of the inactivation process. The sequence is that of Delayed-rectifier potassium channel regulatory subunit KCNS1 from Gorilla gorilla gorilla (Western lowland gorilla).